The sequence spans 772 residues: Mitochondrial intermediate peptidase (772 aa).

The N-terminal 37 residues, Met1–Thr37, are a transit peptide targeting the mitochondrion. His558 is a Zn(2+) binding site. Residue Glu559 is part of the active site. Residues His562 and Glu587 each coordinate Zn(2+).

It belongs to the peptidase M3 family. Requires Zn(2+) as cofactor.

The protein localises to the mitochondrion matrix. The catalysed reaction is Release of an N-terminal octapeptide as second stage of processing of some proteins imported into the mitochondrion.. Stimulated by Fe(2+). Cleaves proteins, imported into the mitochondrion, to their mature size. While most mitochondrial precursor proteins are processed to the mature form in one step by mitochondrial processing peptidase (MPP), the sequential cleavage by MIP of an octapeptide after initial processing by MPP is a required step for a subgroup of nuclear-encoded precursor proteins destined for the matrix or the inner membrane. Cleaves precursor proteins of respiratory components, including subunits of the electron transport chain and tricarboxylic acid cycle enzymes, and components of the mitochondrial genetic machinery, including ribosomal proteins, translation factors, and proteins required for mitochondrial DNA metabolism. The polypeptide is Mitochondrial intermediate peptidase (OCT1) (Saccharomyces cerevisiae (strain ATCC 204508 / S288c) (Baker's yeast)).